The primary structure comprises 578 residues: Probable arginine--tRNA ligase, mitochondrial (578 aa).

The N-terminal 16 residues, 1–16, are a transit peptide targeting the mitochondrion; it reads MACGFRRSIASQLSRV. Residues 133–135, His144, Tyr322, Asp326, and Gln350 each bind L-arginine; that span reads SPN. The short motif at 133–144 is the 'HIGH' region element; it reads SPNVAKKFHVGH. Lys568 bears the N6-acetyllysine mark.

Belongs to the class-I aminoacyl-tRNA synthetase family.

It is found in the mitochondrion membrane. The catalysed reaction is tRNA(Arg) + L-arginine + ATP = L-arginyl-tRNA(Arg) + AMP + diphosphate. Catalyzes the attachment of arginine to tRNA(Arg) in a two-step reaction: arginine is first activated by ATP to form Arg-AMP and then transferred to the acceptor end of tRNA(Arg). The polypeptide is Probable arginine--tRNA ligase, mitochondrial (RARS2) (Bos taurus (Bovine)).